Consider the following 547-residue polypeptide: Membrane transporter D1 (547 aa).

At 1–2 the chain is on the cytoplasmic side; the sequence is MR. The helical transmembrane segment at 3–25 threads the bilayer; it reads ASVMLCAALGGFLFGYDTGVINA. Residues 26–43 lie on the Extracellular side of the membrane; it reads ALFQMKDHFGFSEHSWQY. A helical membrane pass occupies residues 44 to 64; sequence ALIVAIAIAGAFVGAFISGFI. Over 65 to 78 the chain is Cytoplasmic; the sequence is SAAFGRRPCIAVAD. Residues 79-99 form a helical membrane-spanning segment; sequence ALFVIGSVLMGAAPNVEVVLV. At 100–101 the chain is on the extracellular side; the sequence is SR. A helical membrane pass occupies residues 102-122; that stretch reads VIVGLAIGISSATIPVYLAEV. Topologically, residues 123-136 are cytoplasmic; that stretch reads TSPKHRGATIVLNN. Residues 137 to 157 form a helical membrane-spanning segment; it reads LFLTGGQFVAAGFTAIMVVFT. The Extracellular portion of the chain corresponds to 158 to 164; sequence SKNIGWR. Residues 165–185 form a helical membrane-spanning segment; that stretch reads VAIGIGALPAVVQAFCLLFFL. Residues 186–245 are Cytoplasmic-facing; sequence PESPRWLLSKGHADRAKAVADKFEVDLCEFQEGDELPSVRIDYRPLMARDMRFRVVLSSG. The chain crosses the membrane as a helical span at residues 246 to 266; it reads LQIIQQFSGINTIMYYSSVIL. Over 267–276 the chain is Extracellular; it reads YDAGFRDAIM. The chain crosses the membrane as a helical span at residues 277 to 297; it reads PVVLSIPLAFMNALFTAVAIF. Topologically, residues 298–308 are cytoplasmic; it reads TVDRFGRRRML. The chain crosses the membrane as a helical span at residues 309 to 329; it reads LISVFGCLVLLVVIAIIGFFI. The Extracellular portion of the chain corresponds to 330 to 339; the sequence is GTRISYSVGG. A helical membrane pass occupies residues 340–360; that stretch reads GLFLALLAVFLALYAPGIGCI. At 361–385 the chain is on the cytoplasmic side; sequence PWVIMGEIFPTHLRTSAASVATMAN. The chain crosses the membrane as a helical span at residues 386–406; the sequence is WGANVLVSQVFPILMGAIGVG. Position 407 (G407) is a topological domain, extracellular. The helical transmembrane segment at 408 to 428 threads the bilayer; that stretch reads TFTIISGLMALGCIFVYFFAV. The Cytoplasmic portion of the chain corresponds to 429–547; it reads ETKGLTLEQI…AIKAAPHEPK (119 aa). Disordered stretches follow at residues 449–468 and 510–547; these read PPRF…YRED and VSNK…HEPK. The span at 519–529 shows a compositional bias: polar residues; it reads TSSSSDPQSLE.

It belongs to the major facilitator superfamily. Sugar transporter (TC 2.A.1.1) family.

Its subcellular location is the membrane. The sequence is that of Membrane transporter D1 from Leishmania donovani.